A 306-amino-acid polypeptide reads, in one-letter code: Protease HtpX homolog (306 aa).

2 helical membrane passes run 10–30 (TTLLFALMWAIIMLIWWATGG) and 33–53 (QTLSIYIVIGLITTFGTYWFS). Zn(2+) is bound at residue His-135. Glu-136 is a catalytic residue. His-139 is a binding site for Zn(2+). 2 consecutive transmembrane segments (helical) span residues 149 to 169 (AIASAMATVISYLGYSLMYFG) and 181 to 201 (GLGLIGALLSVILAPIAASLI). Glu-210 lines the Zn(2+) pocket.

This sequence belongs to the peptidase M48B family. Requires Zn(2+) as cofactor.

The protein resides in the cell membrane. This Bifidobacterium longum (strain NCC 2705) protein is Protease HtpX homolog.